The sequence spans 192 residues: PBAN-type neuropeptides (192 aa).

The first 23 residues, 1 to 23 (MYKTNIVFNVLALALFSIFFASC), serve as a signal peptide directing secretion. Position 47 is a leucine amide (Leu-47). Positions 51-94 (SMKPSTEDNRQTFLRLLEAADALKFYYDQLPYERQADEPETKVT) are excised as a propeptide. Residues Leu-103, Leu-122, Leu-158, and Leu-168 each carry the leucine amide modification. The propeptide occupies 171 to 192 (ELSYDYPTKYRVARSVNKTMDN).

Belongs to the pyrokinin family. Expression is restricted to the subesophageal ganglion.

It localises to the secreted. Its function is as follows. A hormone that controls sex pheromone production in females and pheromone responsiveness in male. Also mediates visceral muscle contractile activity (myotropic activity). Identical to MRCH which is implicated in the formation of both melanin in the cuticle and ommochrome in the epidermis of armyworm species. Diapause hormone (DH) is responsible for induction of embryonic diapause. Functionally, the three SGNPS are far less active than DH in inducing diapause eggs. Beta-SGNP expressed higher pban activity than PBAN-I, but alpha- and gamma-SGNP were far less active in pheromonotropic activity. The sequence is that of PBAN-type neuropeptides from Bombyx mori (Silk moth).